A 185-amino-acid polypeptide reads, in one-letter code: ATP synthase subunit delta (185 aa).

The protein belongs to the ATPase delta chain family. In terms of assembly, F-type ATPases have 2 components, F(1) - the catalytic core - and F(0) - the membrane proton channel. F(1) has five subunits: alpha(3), beta(3), gamma(1), delta(1), epsilon(1). CF(0) has four main subunits: a(1), b(1), b'(1) and c(10-14). The alpha and beta chains form an alternating ring which encloses part of the gamma chain. F(1) is attached to F(0) by a central stalk formed by the gamma and epsilon chains, while a peripheral stalk is formed by the delta, b and b' chains.

The protein resides in the cellular thylakoid membrane. Functionally, f(1)F(0) ATP synthase produces ATP from ADP in the presence of a proton or sodium gradient. F-type ATPases consist of two structural domains, F(1) containing the extramembraneous catalytic core and F(0) containing the membrane proton channel, linked together by a central stalk and a peripheral stalk. During catalysis, ATP synthesis in the catalytic domain of F(1) is coupled via a rotary mechanism of the central stalk subunits to proton translocation. In terms of biological role, this protein is part of the stalk that links CF(0) to CF(1). It either transmits conformational changes from CF(0) to CF(1) or is implicated in proton conduction. The chain is ATP synthase subunit delta from Acaryochloris marina (strain MBIC 11017).